A 129-amino-acid polypeptide reads, in one-letter code: Large ribosomal subunit protein bL12 (129 aa).

Residues 94-113 are disordered; sequence TEGLPKTVKEKTSKSDAEDT.

The protein belongs to the bacterial ribosomal protein bL12 family. As to quaternary structure, homodimer. Part of the ribosomal stalk of the 50S ribosomal subunit. Forms a multimeric L10(L12)X complex, where L10 forms an elongated spine to which 2 to 4 L12 dimers bind in a sequential fashion. Binds GTP-bound translation factors.

Forms part of the ribosomal stalk which helps the ribosome interact with GTP-bound translation factors. Is thus essential for accurate translation. The polypeptide is Large ribosomal subunit protein bL12 (Chlamydia pneumoniae (Chlamydophila pneumoniae)).